We begin with the raw amino-acid sequence, 306 residues long: Ribonuclease Z (306 aa).

The Zn(2+) site is built by histidine 63, histidine 65, aspartate 67, histidine 68, histidine 140, aspartate 211, and histidine 269. Aspartate 67 serves as the catalytic Proton acceptor.

The protein belongs to the RNase Z family. As to quaternary structure, homodimer. The cofactor is Zn(2+).

The enzyme catalyses Endonucleolytic cleavage of RNA, removing extra 3' nucleotides from tRNA precursor, generating 3' termini of tRNAs. A 3'-hydroxy group is left at the tRNA terminus and a 5'-phosphoryl group is left at the trailer molecule.. Zinc phosphodiesterase, which displays some tRNA 3'-processing endonuclease activity. Probably involved in tRNA maturation, by removing a 3'-trailer from precursor tRNA. The chain is Ribonuclease Z from Listeria monocytogenes serotype 4b (strain CLIP80459).